Here is a 193-residue protein sequence, read N- to C-terminus: uncharacterized protein (193 aa).

A disordered region spans residues 1–84 (MTSKCSKWHE…RRSNQRIQLY (84 aa)). A compositionally biased stretch (basic residues) spans 43–78 (SSPRRSSPRRSPRRSSPRRSSPRRSSPRRSSPRRSN).

It belongs to the IIV-6 378R family.

This is an uncharacterized protein from Invertebrate iridescent virus 6 (IIV-6).